The sequence spans 301 residues: Alpha-ketoglutarate-dependent sulfate ester dioxygenase (301 aa).

Histidine 81 is a substrate binding site. Fe cation-binding residues include histidine 108 and aspartate 110. Residue valine 111 coordinates substrate. Residue threonine 135 participates in 2-oxoglutarate binding. Position 264 (histidine 264) interacts with Fe cation. Arginine 275 and arginine 279 together coordinate 2-oxoglutarate.

The protein belongs to the TfdA dioxygenase family. As to quaternary structure, homotetramer. The cofactor is Fe(2+).

The catalysed reaction is a primary linear alkyl sulfate ester + 2-oxoglutarate + O2 = an aldehyde + sulfate + succinate + CO2 + H(+). It carries out the reaction 2-ethylhexyl sulfate + 2-oxoglutarate + O2 = 2-ethylhexanal + sulfate + succinate + CO2 + H(+). It catalyses the reaction decyl sulfate + 2-oxoglutarate + O2 = decanal + sulfate + succinate + CO2 + H(+). The enzyme catalyses hexyl sulfate + 2-oxoglutarate + O2 = hexanal + sulfate + succinate + CO2 + H(+). The catalysed reaction is nonyl sufate + 2-oxoglutarate + O2 = nonanal + sulfate + succinate + CO2 + H(+). Strongly stimulated by ascorbate. In terms of biological role, catalyzes the oxygenolytic cleavage of 2-ethylhexyl sulfate (2-EHS) in the presence of alpha-ketoglutarate to yield 2-ethyl-hexanal and succinate, the decarboxylated form of alpha-ketoglutarate. It can accept a wide range of alpha-keto acids including 2-oxo-valerate, 2-oxo-adipate, 2-oxo-octanoate, 3-methyl-2-oxo-butyrate, oxaloacetate-alpha-ketoadipate, and alpha-ketooctanoate. It can catalyze the cleavage of medium-chain alkyl sulfate esters such as butylsulfate, pentylsulfate, hexylsulfate, heptylsulfate, octylsulfate, nonylsulfate, decylsulfate and sodium dodecyl sulfate (SDS). This Pseudomonas putida (Arthrobacter siderocapsulatus) protein is Alpha-ketoglutarate-dependent sulfate ester dioxygenase.